Reading from the N-terminus, the 358-residue chain is NAC domain-containing protein 12 (358 aa).

The region spanning 16-177 is the NAC domain; it reads VPPGFRFHPT…GWVVCRVFRK (162 aa). A DNA-binding region spans residues 116–183; the sequence is IGLRKTLVFY…VFRKKNYQKI (68 aa).

In terms of tissue distribution, stems and roots, specifically in interfascicular fibers (sclerenchyma), cells differentiating into vascular vessels (cambium), and xylem.

The protein resides in the nucleus. In terms of biological role, transcriptional activator of genes involved in biosynthesis of secondary walls. Together with NST1, required for the secondary cell wall thickening and lignification of sclerenchymatous fibers and secondary xylem vessels (tracheary elements). Seems to repress the secondary cell wall thickening of xylary fibers. May also regulate the secondary cell wall lignification of other tissues. Binds to and activates the promoter of MYB46. This chain is NAC domain-containing protein 12, found in Arabidopsis thaliana (Mouse-ear cress).